The following is a 283-amino-acid chain: Gap junction beta-1 protein (283 aa).

At 1-22 the chain is on the cytoplasmic side; the sequence is MNWTGLYTLLSGVNRHSTAIGR. Residues 23–45 form a helical membrane-spanning segment; that stretch reads VWLSVIFIFRIMVLVVAAESVWG. At 46–75 the chain is on the extracellular side; the sequence is DEKSSFICNTLQPGCNSVCYDQFFPISHVR. A helical membrane pass occupies residues 76 to 95; that stretch reads LWSLQLILVSTPALLVAMHV. Topologically, residues 96-130 are cytoplasmic; the sequence is AHQQHIEKKMLRLEGHGDPLHLEEVKRHKVHISGT. Residues 131–153 traverse the membrane as a helical segment; it reads LWWAYVISVVFRLLFEAVFMYVF. Over 154–191 the chain is Extracellular; the sequence is YLLYPGYAMVRLVKCDVYPCPNTVDCFVSRPTEKTVFT. The chain crosses the membrane as a helical span at residues 192–214; it reads VFMLAASGICIILNVAEVVYLII. The Cytoplasmic portion of the chain corresponds to 215–283; the sequence is RACARRAQRR…AEKSDRCSAC (69 aa). 4 positions are modified to phosphoserine: S233, S258, S266, and S277.

The protein belongs to the connexin family. Beta-type (group I) subfamily. As to quaternary structure, a connexon is composed of a hexamer of connexins. Interacts with CNST.

The protein localises to the cell membrane. Its subcellular location is the cell junction. The protein resides in the gap junction. One gap junction consists of a cluster of closely packed pairs of transmembrane channels, the connexons, through which materials of low MW diffuse from one cell to a neighboring cell. This is Gap junction beta-1 protein (GJB1) from Macaca fascicularis (Crab-eating macaque).